The sequence spans 444 residues: 3-phosphoshikimate 1-carboxyvinyltransferase (444 aa).

Residues Lys-24, Ser-25, and Arg-29 each contribute to the 3-phosphoshikimate site. Lys-24 lines the phosphoenolpyruvate pocket. The phosphoenolpyruvate site is built by Gly-97 and Arg-125. 3-phosphoshikimate-binding residues include Ser-170, Gln-172, Asp-318, and Lys-345. Gln-172 contributes to the phosphoenolpyruvate binding site. The active-site Proton acceptor is Asp-318. Residues Arg-349 and Arg-391 each contribute to the phosphoenolpyruvate site.

The protein belongs to the EPSP synthase family. In terms of assembly, monomer.

The protein localises to the cytoplasm. It carries out the reaction 3-phosphoshikimate + phosphoenolpyruvate = 5-O-(1-carboxyvinyl)-3-phosphoshikimate + phosphate. It participates in metabolic intermediate biosynthesis; chorismate biosynthesis; chorismate from D-erythrose 4-phosphate and phosphoenolpyruvate: step 6/7. Functionally, catalyzes the transfer of the enolpyruvyl moiety of phosphoenolpyruvate (PEP) to the 5-hydroxyl of shikimate-3-phosphate (S3P) to produce enolpyruvyl shikimate-3-phosphate and inorganic phosphate. The sequence is that of 3-phosphoshikimate 1-carboxyvinyltransferase from Halorhodospira halophila (strain DSM 244 / SL1) (Ectothiorhodospira halophila (strain DSM 244 / SL1)).